Here is a 3726-residue protein sequence, read N- to C-terminus: Histone-lysine N-methyltransferase trithorax (3726 aa).

4 disordered regions span residues 1 to 247, 321 to 352, 371 to 429, and 509 to 624; these read MGRS…ATTS, QLNSPVVDNPSPSPPIASGSTPSVEGGIGVGG, NEVA…TAKQ, and AGAS…RSTR. 2 stretches are compositionally biased toward low complexity: residues 31–53 and 71–101; these read PAEPQQPAPESQQPSGSGSGSSA and GGASISGNTASSSAGSGNSGNGSSSGSSTGS. Positions 102 to 115 are enriched in gly residues; it reads GSSGSGSTNGGSVN. A compositionally biased stretch (basic and acidic residues) spans 126 to 143; it reads LDKEAVTKDQNGDGDKTR. Low complexity predominate over residues 147-205; that stretch reads SSAPSGKLSAAASGKALSKSSRTFSASTSVTSSGRSSGSSPDGNSGASSDGASSGISCG. Residues 206 to 215 are compositionally biased toward polar residues; that stretch reads KSTAKSTEAS. Residues 222 to 247 show a composition bias toward low complexity; that stretch reads TTGAGTCSSAKSSKASSGTTSEATTS. 2 stretches are compositionally biased toward low complexity: residues 384–402 and 509–525; these read AAANGAASGKGSASNGPPA and AGASSSSSNQESGSSSN. Residues 553–586 show a composition bias toward acidic residues; that stretch reads PEDQNNAEDDEMDDDDDDEEAEEDDENEDDNDEA. Residues 587 to 610 show a composition bias toward basic and acidic residues; the sequence is VSEKSAETEKSAGADERDPDEKQL. The segment at residues 759-884 is a DNA-binding region (nuclear receptor); that stretch reads PSACSICSAV…PGMRGEAAAR (126 aa). Disordered regions lie at residues 915 to 937, 981 to 1049, 1115 to 1184, and 1208 to 1231; these read TSVKWKSSGDSTSALTSIKPNPL, LTKK…SHGV, VPSA…SSAK, and DIATSSSVTQSSNQTQGRKTKEHR. Residues 918 to 937 are compositionally biased toward polar residues; it reads KWKSSGDSTSALTSIKPNPL. A compositionally biased stretch (basic and acidic residues) spans 986-1000; sequence SKQEKEKVKESEQSE. A compositionally biased stretch (low complexity) spans 1031–1041; the sequence is PQTSTTTQPSA. Residues 1123–1132 are compositionally biased toward basic and acidic residues; it reads SPEKPTHIVT. Low complexity-rich tracts occupy residues 1173-1183 and 1211-1223; these read GTASAAGGSSA and TSSSVTQSSNQTQ. PHD-type zinc fingers lie at residues 1266 to 1347, 1348 to 1393, and 1421 to 1482; these read RALC…CTVC, YTCN…CLKC, and GNFC…CARR. A Bromo domain is found at 1496–1663; sequence AVMEEFKASL…SEQFPWFQNE (168 aa). The interval 1573-1592 is disordered; it reads FKDQQQQQQQRNANMNKPRV. The C2HC pre-PHD-type zinc-finger motif lies at 1734–1774; sequence TRMCLFCRKSGEGLSGEEARLLYCGHDCWVHTNCAMWSAEV. The segment at 1795–1842 adopts a PHD-type 4 zinc-finger fold; sequence IKCTVCGNRGATVGCNVRSCGEHYHYPCARSIDCAFLTDKSMYCPAHA. Residues 1884 to 1941 enclose the FYR N-terminal domain; sequence RVQFHIGSLEVRQLGAIVPRFSDSYEAVVPINFLCSRLYWSSKEPWKIVEYTVRTTIQ. 7 disordered regions span residues 1991–2019, 2068–2110, 2283–2302, 2649–2669, 2866–2894, 3029–3096, and 3347–3381; these read GGTDWSGEFPNPNSCVPPDENTEEEPQQQ, TQAM…WPAS, CSPTMSSNETESDVSGQGMT, GGGADGNQPGSNQQPLILGGT, SNLKQSQVKGKAASGTGTTCGAPPSIASK, QHFS…PTPP, and RKEEQRTVSQEQEQSKAAIVPTAAAPEPPQPIQEP. Residues 2074–2087 are compositionally biased toward low complexity; that stretch reads NQAQNQNQQAGGAN. The span at 3032–3043 shows a compositional bias: low complexity; that stretch reads STSSSSSSSNCS. Residues 3044-3057 show a composition bias toward polar residues; it reads LPTNVVNPMQQQAP. Positions 3386–3470 constitute an FYR C-terminal domain; the sequence is GPHLLYEIQS…EKCSKYTPKY (85 aa). One can recognise an SET domain in the interval 3588–3704; the sequence is DYVGVFRSHI…QGEELTYDYK (117 aa). Residues His-3598 and Arg-3600 each coordinate S-adenosyl-L-methionine. Residue Cys-3641 is modified to S-methylcysteine; by autocatalysis. Residues Tyr-3642 and 3665 to 3666 contribute to the S-adenosyl-L-methionine site; that span reads NH. 4 residues coordinate Zn(2+): Cys-3668, Cys-3714, Cys-3716, and Cys-3721. A Post-SET domain is found at 3710-3726; sequence EKIPCSCGSKRCRKYLN.

It belongs to the class V-like SAM-binding methyltransferase superfamily. Histone-lysine methyltransferase family. TRX/MLL subfamily. Interacts (via SET domain) with ash1 (via SET domain). Interacts with Nup98. As to expression, maternal isoforms are expressed in syncytial blastoderm, confined to the ventral region fated to become mesoderm. An additional broad domain of expression arises during cellularization and is quickly resolved into four pair-rule-like stripes in the posterior half of the embryo.

It localises to the nucleus. Its subcellular location is the chromosome. It catalyses the reaction L-lysyl(9)-[histone H3] + 3 S-adenosyl-L-methionine = N(6),N(6),N(6)-trimethyl-L-lysyl(9)-[histone H3] + 3 S-adenosyl-L-homocysteine + 3 H(+). It carries out the reaction L-cysteinyl-[protein] + S-adenosyl-L-methionine = S-methyl-L-cysteinyl-[protein] + S-adenosyl-L-homocysteine + H(+). Its function is as follows. Histone methyltransferase that methylates 'Lys-4' of histone H3 (H3K4me). H3K4me represents a specific tag for epigenetic transcriptional activation. Functions in segment determination through interaction with genes of bithorax (BX-C) and antennapedia (ANT-C) complexes. Acts as an activator of BX-C. Involved in the very early regulation of homeotic genes expressed only in the posterior region of the embryo. Also has auto-methylation activity on Cys-3641. This is Histone-lysine N-methyltransferase trithorax from Drosophila melanogaster (Fruit fly).